The chain runs to 352 residues: Protein MGF 360-16R (352 aa).

This sequence belongs to the asfivirus MGF 360 family.

In terms of biological role, plays a role in virus cell tropism, and may be required for efficient virus replication in macrophages. The polypeptide is Protein MGF 360-16R (African swine fever virus (isolate Tick/South Africa/Pretoriuskop Pr4/1996) (ASFV)).